We begin with the raw amino-acid sequence, 293 residues long: MGGDKIKKDKRQKREDYRAAMRKDDISELPRKKFYRQRAHANPFSDHQLIYPPHPDQMDWSSLYPHYIVDEPTTTSPPPPPPVPEQTPSEPDLTPLRPKPLSKEVSVADIGCGFGGLLIALAPTMPEALILGLEIRVSVTHFVEDRIKALRAQNQAAGLYRNVGVLRANTMKFLPNFFRKAQLEKVFICFPDPHFKIRKHKQRIVSTTLNSEYAYVVKPGGIVYTITDVLDLHEWMVQHFDAHPSFERVSEEEQEADPCVAIMRTETEEGKKVERHKGEKHVALFRRLEDPAW.

A compositionally biased stretch (basic and acidic residues) spans 1–31 (MGGDKIKKDKRQKREDYRAAMRKDDISELPR). 2 disordered regions span residues 1–33 (MGGDKIKKDKRQKREDYRAAMRKDDISELPRKK) and 68–97 (IVDEPTTTSPPPPPPVPEQTPSEPDLTPLR). Pro residues predominate over residues 75–85 (TSPPPPPPVPE). S-adenosyl-L-methionine contacts are provided by residues Gly-111, 134–135 (EI), 169–170 (NT), and Cys-189. Asp-192 is an active-site residue. Residue 267–269 (TEE) coordinates S-adenosyl-L-methionine.

The protein belongs to the class I-like SAM-binding methyltransferase superfamily. TrmB family. Forms a complex with TRM82.

Its subcellular location is the nucleus. It carries out the reaction guanosine(46) in tRNA + S-adenosyl-L-methionine = N(7)-methylguanosine(46) in tRNA + S-adenosyl-L-homocysteine. The protein operates within tRNA modification; N(7)-methylguanine-tRNA biosynthesis. Its function is as follows. Catalyzes the formation of N(7)-methylguanine at position 46 (m7G46) in tRNA. In Chaetomium globosum (strain ATCC 6205 / CBS 148.51 / DSM 1962 / NBRC 6347 / NRRL 1970) (Soil fungus), this protein is tRNA (guanine-N(7)-)-methyltransferase.